A 454-amino-acid chain; its full sequence is Epoxide hydrolase 1 (454 aa).

A helical transmembrane segment spans residues 1 to 21 (MWLEILLASVLGFVIYWFVSK). Residues 22–454 (DKEETLLLGD…RKFMGLLEQQ (433 aa)) lie on the Cytoplasmic side of the membrane. The active-site Nucleophile is the Asp226. Residue Arg294 is modified to Dimethylated arginine. Residue Tyr373 is the Proton donor of the active site. The Proton acceptor role is filled by His430.

Belongs to the peptidase S33 family.

It is found in the microsome membrane. The protein localises to the endoplasmic reticulum membrane. It catalyses the reaction cis-stilbene oxide + H2O = (1R,2R)-hydrobenzoin. The catalysed reaction is 1-(4-methoxyphenyl)-N-methyl-N-[(3-methyloxetan-3-yl)methyl]methanamine + H2O = 2-{[(4-methoxybenzyl)(methyl)amino]methyl}-2-methylpropane-1,3-diol. It carries out the reaction 8,9-epoxy-(5Z,11Z,14Z)-eicosatrienoate + H2O = 8,9-dihydroxy-(5Z,11Z,14Z)-eicosatrienoate. The enzyme catalyses 11,12-epoxy-(5Z,8Z,14Z)-eicosatrienoate + H2O = 11,12-dihydroxy-(5Z,8Z,14Z)-eicosatrienoate. It catalyses the reaction 2-(5Z,8Z,11Z,14Z-eicosatetraenoyl)-glycerol + H2O = glycerol + (5Z,8Z,11Z,14Z)-eicosatetraenoate + H(+). Its activity is regulated as follows. Inhibited by 10-hydroxystearamide and methoxy-arachidonyl fluorophosphate. In terms of biological role, biotransformation enzyme that catalyzes the hydrolysis of arene and aliphatic epoxides to less reactive and more water soluble dihydrodiols by the trans addition of water. May play a role in the metabolism of endogenous lipids such as epoxide-containing fatty acids. Metabolizes the abundant endocannabinoid 2-arachidonoylglycerol (2-AG) to free arachidonic acid (AA) and glycerol. Binds 20(S)-hydroxycholesterol (20(S)-OHC). In Sus scrofa (Pig), this protein is Epoxide hydrolase 1 (EPHX1).